We begin with the raw amino-acid sequence, 910 residues long: Myelin regulatory factor-like protein (910 aa).

The segment at residues 142 to 405 (GCSYPQQPLC…SNPGQFENDS (264 aa)) is a DNA-binding region (NDT80). A disordered region spans residues 189–208 (RSRSSEVQDPDSEGQNRMPT). The region spanning 451–559 (SDSRAKQNIQ…KLTNNLEERI (109 aa)) is the Peptidase S74 domain. Residues 543–575 (GAVKQLCKLTNNLEERIEELEIWNRKLARLKRL) adopt a coiled-coil conformation. A helical membrane pass occupies residues 628–648 (LVITLIAVMAFCALTIVALYI). Positions 661–682 (LPPSNITSSQEPALLPTASSSA) are disordered. Residues 663–682 (PSNITSSQEPALLPTASSSA) are compositionally biased toward polar residues.

It belongs to the MRF family.

The protein resides in the membrane. The protein is Myelin regulatory factor-like protein (MYRFL) of Homo sapiens (Human).